The sequence spans 530 residues: Zinc finger protein ZIC 4 (530 aa).

Composition is skewed to basic residues over residues 31-40 (HHPHHHHHPP) and 97-113 (NPHHRHHHHHHHHHHMA). Disordered stretches follow at residues 31 to 50 (HHPHHHHHPPHLPQSVTGYP) and 87 to 138 (PGAL…SYSS). A C2H2-type 1; atypical zinc finger spans residues 284–317 (LICKWIEEDQLPKKLCSKTFSTMHELVTHVTVEH). A C2H2-type 2; atypical zinc finger spans residues 326–353 (HICFWEECPREGKPFKAKYKLVNHIRVH). 3 C2H2-type zinc fingers span residues 359–383 (FPCPFPGCGKVFARSENLKIHKRTH), 389–413 (FKCEFEGCDRRFANSSDRKKHSHVH), and 419–443 (YNCKVRGCDKSYTHPSSLRKHMKVH). The disordered stretch occupies residues 432-530 (HPSSLRKHMK…YSNWQATNTF (99 aa)). Residues 435-444 (SLRKHMKVHC) are compositionally biased toward basic residues. 2 stretches are compositionally biased toward low complexity: residues 455–467 (SSIPSLVSPSSDS) and 474–485 (TSSQPEPPTSSQ). A compositionally biased stretch (polar residues) spans 520–530 (SYSNWQATNTF).

It belongs to the GLI C2H2-type zinc-finger protein family. At mid-gastrula stage (stage 11.5), weakly expressed in the prospective neural fold. Expressed in the neural plate border region at early neurula stage (stage 15) with strongest expression in the prospective regions of the hyoid and branchial crests. Expression in the dorsal central nervous system (CNS) continues through late neurula stage and early tail bud stages with expression strongest in the olfactory placode and expression levels increasing as development progresses. Becomes expressed in somites.

It localises to the nucleus. Its function is as follows. May bind to DNA. Induces neural and neural crest differentiation. Does not induce anterior neural tissue. The sequence is that of Zinc finger protein ZIC 4 (zic4) from Xenopus laevis (African clawed frog).